A 385-amino-acid chain; its full sequence is Glucose-fructose oxidoreductase domain-containing protein 2 (385 aa).

The N-terminal stretch at 1 to 25 is a signal peptide; the sequence is MKMLPGVGVFGTGSSARVLVPLLRA.

It belongs to the Gfo/Idh/MocA family.

Its subcellular location is the secreted. It is found in the extracellular space. It localises to the extracellular matrix. Promotes matrix assembly. This is Glucose-fructose oxidoreductase domain-containing protein 2 (GFOD2) from Homo sapiens (Human).